The primary structure comprises 430 residues: tRNA(Ile)-lysidine synthase (430 aa).

21–26 provides a ligand contact to ATP; that stretch reads SGGLDS.

Belongs to the tRNA(Ile)-lysidine synthase family.

The protein resides in the cytoplasm. It catalyses the reaction cytidine(34) in tRNA(Ile2) + L-lysine + ATP = lysidine(34) in tRNA(Ile2) + AMP + diphosphate + H(+). Functionally, ligates lysine onto the cytidine present at position 34 of the AUA codon-specific tRNA(Ile) that contains the anticodon CAU, in an ATP-dependent manner. Cytidine is converted to lysidine, thus changing the amino acid specificity of the tRNA from methionine to isoleucine. This Salmonella paratyphi A (strain ATCC 9150 / SARB42) protein is tRNA(Ile)-lysidine synthase.